A 192-amino-acid chain; its full sequence is MPIILGIDPGSRITGYGIIRQQGRQLEYLGSGAIRINASDLPSRLKHIYAGVTEIITQFQPDMFAIEQVFMAKNADSALKLGQARGTAIVAAVNHDLPVFEYAARLVKQTVTGIGSADKLQVQDMVTRMLQLSAKPQVDAADALAIAITHAHSIQHSLIVAKQNNPSITTHKEQILALMKTRYSRGRFRLKG.

Active-site residues include Asp-8, Glu-67, and Asp-139. Mg(2+) is bound by residues Asp-8, Glu-67, and Asp-139.

Belongs to the RuvC family. As to quaternary structure, homodimer which binds Holliday junction (HJ) DNA. The HJ becomes 2-fold symmetrical on binding to RuvC with unstacked arms; it has a different conformation from HJ DNA in complex with RuvA. In the full resolvosome a probable DNA-RuvA(4)-RuvB(12)-RuvC(2) complex forms which resolves the HJ. It depends on Mg(2+) as a cofactor.

The protein localises to the cytoplasm. The catalysed reaction is Endonucleolytic cleavage at a junction such as a reciprocal single-stranded crossover between two homologous DNA duplexes (Holliday junction).. Functionally, the RuvA-RuvB-RuvC complex processes Holliday junction (HJ) DNA during genetic recombination and DNA repair. Endonuclease that resolves HJ intermediates. Cleaves cruciform DNA by making single-stranded nicks across the HJ at symmetrical positions within the homologous arms, yielding a 5'-phosphate and a 3'-hydroxyl group; requires a central core of homology in the junction. The consensus cleavage sequence is 5'-(A/T)TT(C/G)-3'. Cleavage occurs on the 3'-side of the TT dinucleotide at the point of strand exchange. HJ branch migration catalyzed by RuvA-RuvB allows RuvC to scan DNA until it finds its consensus sequence, where it cleaves and resolves the cruciform DNA. In Haemophilus ducreyi (strain 35000HP / ATCC 700724), this protein is Crossover junction endodeoxyribonuclease RuvC.